The primary structure comprises 423 residues: Glutamate-1-semialdehyde 2,1-aminomutase (423 aa).

The residue at position 259 (lysine 259) is an N6-(pyridoxal phosphate)lysine.

It belongs to the class-III pyridoxal-phosphate-dependent aminotransferase family. HemL subfamily. As to quaternary structure, homodimer. The cofactor is pyridoxal 5'-phosphate.

The protein resides in the cytoplasm. It catalyses the reaction (S)-4-amino-5-oxopentanoate = 5-aminolevulinate. Its pathway is porphyrin-containing compound metabolism; protoporphyrin-IX biosynthesis; 5-aminolevulinate from L-glutamyl-tRNA(Glu): step 2/2. This chain is Glutamate-1-semialdehyde 2,1-aminomutase, found in Thermosipho africanus (strain TCF52B).